We begin with the raw amino-acid sequence, 314 residues long: Homeobox-leucine zipper protein HAT7 (314 aa).

Residues 77 to 109 (HHHLTQKSPTTTNNMNDQDQVGEEDNLSDDGSH) form a disordered region. The span at 82 to 95 (QKSPTTTNNMNDQD) shows a compositional bias: polar residues. A DNA-binding region (homeobox) is located at residues 112 to 171 (LGEKKKRLNLEQVRALEKSFELGNKLEPERKMQLAKALGLQPRQIAIWFQNRRARWKTKQ). Positions 172-207 (LERDYDSLKKQFDVLKSDNDSLLAHNKKLHAELVAL) are leucine-zipper.

This sequence belongs to the HD-ZIP homeobox family. Class I subfamily. Expressed predominantly in flowers, and in the cortex of the root and the stem.

The protein localises to the nucleus. Its function is as follows. Probable transcription factor. This is Homeobox-leucine zipper protein HAT7 (HAT7) from Arabidopsis thaliana (Mouse-ear cress).